The chain runs to 680 residues: UvrABC system protein B (680 aa).

One can recognise a Helicase ATP-binding domain in the interval 27-192 (SNIEAGVTDQ…ERNDYDFHRG (166 aa)). 40–47 (GVTGSGKT) serves as a coordination point for ATP. The short motif at 93–116 (YYDYYQPEAYVPSSDTYIEKDSSI) is the Beta-hairpin element. The region spanning 432–594 (QVDDLLGECR…IVPATIRKAV (163 aa)) is the Helicase C-terminal domain. A UVR domain is found at 637 to 672 (AKQIQQLERDMREAAKELEFERAAELRDRIRLLREH).

This sequence belongs to the UvrB family. In terms of assembly, forms a heterotetramer with UvrA during the search for lesions. Interacts with UvrC in an incision complex.

The protein localises to the cytoplasm. In terms of biological role, the UvrABC repair system catalyzes the recognition and processing of DNA lesions. A damage recognition complex composed of 2 UvrA and 2 UvrB subunits scans DNA for abnormalities. Upon binding of the UvrA(2)B(2) complex to a putative damaged site, the DNA wraps around one UvrB monomer. DNA wrap is dependent on ATP binding by UvrB and probably causes local melting of the DNA helix, facilitating insertion of UvrB beta-hairpin between the DNA strands. Then UvrB probes one DNA strand for the presence of a lesion. If a lesion is found the UvrA subunits dissociate and the UvrB-DNA preincision complex is formed. This complex is subsequently bound by UvrC and the second UvrB is released. If no lesion is found, the DNA wraps around the other UvrB subunit that will check the other stand for damage. The polypeptide is UvrABC system protein B (Nitratidesulfovibrio vulgaris (strain DSM 19637 / Miyazaki F) (Desulfovibrio vulgaris)).